The primary structure comprises 363 residues: 3-isopropylmalate dehydrogenase (363 aa).

76-89 (GPKWDTLPGHLRPE) contacts NAD(+). The substrate site is built by Arg96, Arg106, Arg134, and Asp223. Residues Asp223, Asp247, and Asp251 each coordinate Mg(2+). Residue 281-293 (GSAPDIAGKGVAN) participates in NAD(+) binding.

This sequence belongs to the isocitrate and isopropylmalate dehydrogenases family. LeuB type 1 subfamily. Homodimer. Requires Mg(2+) as cofactor. Mn(2+) is required as a cofactor.

Its subcellular location is the cytoplasm. It carries out the reaction (2R,3S)-3-isopropylmalate + NAD(+) = 4-methyl-2-oxopentanoate + CO2 + NADH. The protein operates within amino-acid biosynthesis; L-leucine biosynthesis; L-leucine from 3-methyl-2-oxobutanoate: step 3/4. Its function is as follows. Catalyzes the oxidation of 3-carboxy-2-hydroxy-4-methylpentanoate (3-isopropylmalate) to 3-carboxy-4-methyl-2-oxopentanoate. The product decarboxylates to 4-methyl-2 oxopentanoate. This chain is 3-isopropylmalate dehydrogenase, found in Halalkalibacterium halodurans (strain ATCC BAA-125 / DSM 18197 / FERM 7344 / JCM 9153 / C-125) (Bacillus halodurans).